The primary structure comprises 188 residues: Diphosphoinositol polyphosphate phosphohydrolase DDP1 (188 aa).

The span at 1-21 (MGKTADNHGPVRSETAREGRE) shows a compositional bias: basic and acidic residues. The tract at residues 1–23 (MGKTADNHGPVRSETAREGRENQ) is disordered. In terms of domain architecture, Nudix hydrolase spans 30–179 (GARLVAGCIC…KRPELLEALN (150 aa)). Residues arginine 32, serine 52, serine 53, and lysine 63 each coordinate 1D-myo-inositol hexakisphosphate. 5-diphospho-1D-myo-inositol 1,2,3,4,6-pentakisphosphate contacts are provided by arginine 32, serine 52, serine 53, and lysine 63. 4 residues coordinate P(1),P(5)-bis(5'-adenosyl) pentaphosphate: arginine 32, serine 52, serine 53, and lysine 63. Mg(2+) is bound by residues lysine 63, glutamate 80, and glutamate 84. The Nudix box motif lies at 65–86 (GVEKDEPNYETTAQRETWEEAG). Aspartate 100 provides a ligand contact to P(1),P(5)-bis(5'-adenosyl) pentaphosphate. Positions 102, 129, 152, and 171 each coordinate 1D-myo-inositol hexakisphosphate. A 5-diphospho-1D-myo-inositol 1,2,3,4,6-pentakisphosphate-binding site is contributed by arginine 102. Residues arginine 152 and arginine 171 each coordinate 5-diphospho-1D-myo-inositol 1,2,3,4,6-pentakisphosphate. P(1),P(5)-bis(5'-adenosyl) pentaphosphate-binding residues include arginine 152, arginine 171, and glutamate 173.

Belongs to the Nudix hydrolase family. DIPP subfamily. Mg(2+) serves as cofactor. Requires Mn(2+) as cofactor. It depends on Zn(2+) as a cofactor.

It is found in the cytoplasm. The protein localises to the nucleus. It carries out the reaction diphospho-myo-inositol polyphosphate + H2O = myo-inositol polyphosphate + phosphate.. The enzyme catalyses P(1),P(6)-bis(5'-adenosyl) hexaphosphate + H2O = adenosine 5'-pentaphosphate + AMP + 2 H(+). The catalysed reaction is P(1),P(5)-bis(5'-adenosyl) pentaphosphate + H2O = adenosine 5'-tetraphosphate + AMP + 2 H(+). It catalyses the reaction [phosphate](n+1) + n H2O = (n+1) phosphate + n H(+). In terms of biological role, may eliminate potentially toxic dinucleoside polyphosphates during sporulation. Most active against diadenosine 5',5'''-P1,P6-hexaphosphate (Ap6A). Can also hydrolyze diadenosine 5',5'''-P1,P5-pentaphosphate (Ap5A), adenosine 5'-pentaphosphate (p5A), and adenosine 5'-tetraphosphate (p4A) are also substrates, but not diadenosine 5',5'''-P1,P4-tetraphosphate (Ap4A) or other dinucleotides, mononucleotides, nucleotide sugars, or nucleotide alcohols. Also cleaves a beta-phosphate from the diphosphate groups in PP-InsP5 (diphosphoinositol pentakisphosphate) and [PP]2-InsP4 (bisdiphosphoinositol tetrakisphosphate). Also has endopolyphosphatase activity. The chain is Diphosphoinositol polyphosphate phosphohydrolase DDP1 (DDP1) from Saccharomyces cerevisiae (strain ATCC 204508 / S288c) (Baker's yeast).